The chain runs to 116 residues: Non-specific lipid-transfer protein (116 aa).

Residues 1 to 22 form the signal peptide; sequence MSLKLACVVVLCMVVGAPLAQG. 3 disulfides stabilise this stretch: Cys36-Cys52, Cys53-Cys98, and Cys73-Cys112.

Belongs to the plant LTP family.

Functionally, plant non-specific lipid-transfer proteins transfer phospholipids as well as galactolipids across membranes. May play a role in wax or cutin deposition in the cell walls of expanding epidermal cells and certain secretory tissues. This is Non-specific lipid-transfer protein from Gossypium hirsutum (Upland cotton).